Reading from the N-terminus, the 285-residue chain is NAD kinase (285 aa).

Residue Asp64 is the Proton acceptor of the active site. NAD(+)-binding positions include 64 to 65, 138 to 139, Arg149, Arg166, Asp168, Leu176, 179 to 184, and Gln238; these read DG, ND, and SGYTIS.

It belongs to the NAD kinase family. It depends on a divalent metal cation as a cofactor.

It is found in the cytoplasm. It catalyses the reaction NAD(+) + ATP = ADP + NADP(+) + H(+). In terms of biological role, involved in the regulation of the intracellular balance of NAD and NADP, and is a key enzyme in the biosynthesis of NADP. Catalyzes specifically the phosphorylation on 2'-hydroxyl of the adenosine moiety of NAD to yield NADP. In Lawsonia intracellularis (strain PHE/MN1-00), this protein is NAD kinase.